Reading from the N-terminus, the 556-residue chain is Polyphenol oxidase 2 (556 aa).

Cu cation contacts are provided by His57, His81, His90, His250, His254, and His282. Positions 79–81 form a cross-link, 2'-(S-cysteinyl)-histidine (Cys-His); sequence CTH. His254 provides a ligand contact to substrate. Residues 379–556 constitute a propeptide, removed in mature form; the sequence is SKPSSGARNT…FDDVAVHVIN (178 aa).

It belongs to the tyrosinase family. As to quaternary structure, heterotetramer. Requires Cu(2+) as cofactor. The C-ter is probably cleaved after Gly-378 since the mature active protein is smaller than the protein encoded by the gene.

The catalysed reaction is 2 L-dopa + O2 = 2 L-dopaquinone + 2 H2O. The enzyme catalyses L-tyrosine + O2 = L-dopaquinone + H2O. Copper-containing oxidase that catalyzes both the o-hydroxylation of monophenols and the subsequent oxidation of the resulting o-diphenols into reactive o-quinones, which evolve spontaneously to produce intermediates, which associate in dark brown pigments. Involved in the initial step of melanin synthesis. Melanins constitute a mechanism of defense and resistance to stress such as UV radiations, free radicals, gamma rays, dehydratation and extreme temperatures, and contribute to the fungal cell-wall resistance against hydrolytic enzymes in avoiding cellular lysis. Fungal pigments are also involved in the formation and stability of spores. The protein is Polyphenol oxidase 2 (PPO2) of Agaricus bisporus (White button mushroom).